A 278-amino-acid chain; its full sequence is NAD kinase (278 aa).

Asp67 acts as the Proton acceptor in catalysis. NAD(+) is bound by residues 67-68 (DG), Arg72, 137-138 (NE), Lys148, Arg165, Asp167, 178-183 (TGYALS), and Gln237.

Belongs to the NAD kinase family. The cofactor is a divalent metal cation.

Its subcellular location is the cytoplasm. It catalyses the reaction NAD(+) + ATP = ADP + NADP(+) + H(+). Functionally, involved in the regulation of the intracellular balance of NAD and NADP, and is a key enzyme in the biosynthesis of NADP. Catalyzes specifically the phosphorylation on 2'-hydroxyl of the adenosine moiety of NAD to yield NADP. This chain is NAD kinase, found in Thermococcus gammatolerans (strain DSM 15229 / JCM 11827 / EJ3).